The following is a 434-amino-acid chain: ATP-dependent protease ATPase subunit HslU (434 aa).

Residues Val18, 60–65 (GVGKTE), Asp247, Glu312, and Arg384 contribute to the ATP site.

Belongs to the ClpX chaperone family. HslU subfamily. As to quaternary structure, a double ring-shaped homohexamer of HslV is capped on each side by a ring-shaped HslU homohexamer. The assembly of the HslU/HslV complex is dependent on binding of ATP.

The protein localises to the cytoplasm. In terms of biological role, ATPase subunit of a proteasome-like degradation complex; this subunit has chaperone activity. The binding of ATP and its subsequent hydrolysis by HslU are essential for unfolding of protein substrates subsequently hydrolyzed by HslV. HslU recognizes the N-terminal part of its protein substrates and unfolds these before they are guided to HslV for hydrolysis. The sequence is that of ATP-dependent protease ATPase subunit HslU from Rhodopseudomonas palustris (strain BisB18).